A 638-amino-acid polypeptide reads, in one-letter code: Chaperone protein DnaK (638 aa).

The residue at position 198 (Thr198) is a Phosphothreonine; by autocatalysis. Residues 602–638 (QAKSQAQGGEEAQAKDAGQSNDDVVDAEFEEVKDDKK) form a disordered region. Residues 624–638 (DVVDAEFEEVKDDKK) show a composition bias toward acidic residues.

Belongs to the heat shock protein 70 family.

Its function is as follows. Acts as a chaperone. This Shewanella denitrificans (strain OS217 / ATCC BAA-1090 / DSM 15013) protein is Chaperone protein DnaK.